We begin with the raw amino-acid sequence, 1344 residues long: Xanthine dehydrogenase (1344 aa).

The 88-residue stretch at 9–96 folds into the 2Fe-2S ferredoxin-type domain; that stretch reads SVLVFFVNGK…GCAVTTVEGI (88 aa). [2Fe-2S] cluster is bound by residues Cys48, Cys53, Cys56, Cys78, Cys118, Cys121, Cys153, and Cys155. In terms of domain architecture, FAD-binding PCMH-type spans 236-425; sequence FSSERVTWYR…LGIHFQKTTP (190 aa). Residues 264-271, Phe344, 354-358, Asp367, Leu415, and Lys433 each bind FAD; these read LVVGNTEV and CLGGN. Mo-molybdopterin is bound by residues Gln781 and Phe812. Residues Glu816 and Arg894 each contribute to the substrate site. Residue Arg926 participates in Mo-molybdopterin binding. Phe928 provides a ligand contact to substrate. Ala1093 is a Mo-molybdopterin binding site. Glu1276 acts as the Proton acceptor in catalysis.

It belongs to the xanthine dehydrogenase family. As to quaternary structure, homodimer. It depends on FAD as a cofactor. Mo-molybdopterin is required as a cofactor. The cofactor is [2Fe-2S] cluster.

Its subcellular location is the peroxisome. It carries out the reaction xanthine + NAD(+) + H2O = urate + NADH + H(+). The catalysed reaction is hypoxanthine + NAD(+) + H2O = xanthine + NADH + H(+). In terms of biological role, key enzyme in purine degradation. Catalyzes the oxidation of hypoxanthine to xanthine. Catalyzes the oxidation of xanthine to uric acid. This Drosophila subobscura (Fruit fly) protein is Xanthine dehydrogenase (Xdh).